The following is a 498-amino-acid chain: ATP synthase subunit beta, chloroplastic (498 aa).

172–179 lines the ATP pocket; the sequence is GGAGVGKT.

The protein belongs to the ATPase alpha/beta chains family. F-type ATPases have 2 components, CF(1) - the catalytic core - and CF(0) - the membrane proton channel. CF(1) has five subunits: alpha(3), beta(3), gamma(1), delta(1), epsilon(1). CF(0) has four main subunits: a(1), b(1), b'(1) and c(9-12).

Its subcellular location is the plastid. It localises to the chloroplast thylakoid membrane. It catalyses the reaction ATP + H2O + 4 H(+)(in) = ADP + phosphate + 5 H(+)(out). Its function is as follows. Produces ATP from ADP in the presence of a proton gradient across the membrane. The catalytic sites are hosted primarily by the beta subunits. In Licuala grandis (Ruffled fan palm), this protein is ATP synthase subunit beta, chloroplastic.